A 416-amino-acid polypeptide reads, in one-letter code: Serine/threonine-protein phosphatase PP2A-like PPG1 (416 aa).

Mn(2+) is bound by residues Asp62, His64, Asp90, and Asn122. His123 serves as the catalytic Proton donor. Mn(2+) contacts are provided by His173 and His248. Residues 363–391 (EDTLQGKSVNGINFDDELSTSDDTSGSGG) are disordered.

The protein belongs to the PPP phosphatase family. PP-2A subfamily. Mn(2+) serves as cofactor.

It carries out the reaction O-phospho-L-seryl-[protein] + H2O = L-seryl-[protein] + phosphate. It catalyses the reaction O-phospho-L-threonyl-[protein] + H2O = L-threonyl-[protein] + phosphate. With respect to regulation, inhibited by okadaic acid, a specific inhibitor of serine/threonine phosphatases of types 1, 2A and 2B. Functionally, serine/threonine-protein phosphatase that plays an important role in controlling colony morphology, filament extension and agar invasion. Down-regulates expression of NRG1 and affects the expression of multiple filament-specific transcripts in response to serum and 37 degrees Celsius. Plays a crucial role in virulence in a mouse model of systemic candidiasis. This is Serine/threonine-protein phosphatase PP2A-like PPG1 from Candida albicans (strain SC5314 / ATCC MYA-2876) (Yeast).